A 231-amino-acid polypeptide reads, in one-letter code: Large ribosomal subunit protein uL1 (231 aa).

This sequence belongs to the universal ribosomal protein uL1 family. As to quaternary structure, part of the 50S ribosomal subunit.

Binds directly to 23S rRNA. The L1 stalk is quite mobile in the ribosome, and is involved in E site tRNA release. In terms of biological role, protein L1 is also a translational repressor protein, it controls the translation of the L11 operon by binding to its mRNA. The sequence is that of Large ribosomal subunit protein uL1 from Pseudomonas syringae pv. tomato (strain ATCC BAA-871 / DC3000).